The sequence spans 292 residues: Cyclin-dependent-like kinase 5 (292 aa).

Residues 4–286 enclose the Protein kinase domain; the sequence is YDKMEKIGEG…ADAALRHAYF (283 aa). ATP is bound by residues 10-18 and Lys33; that span reads IGEGTYGTV. The Proton acceptor role is filled by Asp126. Mg(2+) is bound by residues Asn131 and Asp144.

The protein belongs to the protein kinase superfamily. CMGC Ser/Thr protein kinase family. CDC2/CDKX subfamily. As to quaternary structure, heterodimer composed of a catalytic subunit cdk-5 and a regulatory subunit cdka-1. Interaction with cdka-1 is required for cdk-5 activation. It depends on Mg(2+) as a cofactor.

The protein resides in the cytoplasm. It is found in the cell projection. The protein localises to the dendrite. The enzyme catalyses L-seryl-[protein] + ATP = O-phospho-L-seryl-[protein] + ADP + H(+). It catalyses the reaction L-threonyl-[protein] + ATP = O-phospho-L-threonyl-[protein] + ADP + H(+). Functionally, proline-directed serine/threonine-protein kinase which, in several motor neurons, promotes the polarized trafficking of synaptic vesicles and dense-core vesicles (DCV). In the ventral nerve cord, phosphorylates lin-10 and thereby prevents lin-10-mediated anterograde trafficking of the glutamate receptor glr-1. Involved in the inhibition of glr-1 trafficking in hypoxic conditions. In DA motor neurons but not in DB motor neurons, regulates axonal transport of synaptic vesicle precursors by inhibiting dynein-mediated retrograde transport. Regulates the trafficking of dense-core vesicles in DA and DB motor neurons by promoting anterograde trafficking to the axon and preventing dynein-dependent trafficking to the dendrite. May regulate these processes in association with cdka-1/p35. Activity may be regulated by cyy-1. Involved in synapse formation during DD motor neuron remodeling by regulating transport of disassembled synaptic material to the new synaptic sites probably by activating the motor protein unc-104/kinesin-3. Regulates microtubule polarity in the dendrite of DB motor neurons. May also play a role in GABAergic synaptic vesicle localization in the ventral nerve cord. The chain is Cyclin-dependent-like kinase 5 from Caenorhabditis elegans.